Here is a 535-residue protein sequence, read N- to C-terminus: T-complex protein 1 subunit beta (535 aa).

A2 carries the post-translational modification N-acetylalanine. A Phosphoserine modification is found at S3. K13 bears the N6-acetyllysine mark. G44 serves as a coordination point for ADP. Residue G44 coordinates ATP. S60 carries the post-translational modification Phosphoserine. Residue D97 participates in Mg(2+) binding. G98, T99, T100, and S101 together coordinate ADP. The ATP site is built by G98, T99, and T100. The residue at position 154 (K154) is an N6-acetyllysine. Positions 168 and 169 each coordinate ADP. K181 is subject to N6-acetyllysine. K248 participates in a covalent cross-link: Glycyl lysine isopeptide (Lys-Gly) (interchain with G-Cter in SUMO2). S260 is modified (phosphoserine). The residue at position 261 (T261) is a Phosphothreonine. Residues G410, E495, and K500 each coordinate ADP. ATP is bound by residues E495 and K500.

The protein belongs to the TCP-1 chaperonin family. In terms of assembly, component of the chaperonin-containing T-complex (TRiC), a hexadecamer composed of two identical back-to-back stacked rings enclosing a protein folding chamber. Each ring is made up of eight different subunits: TCP1/CCT1, CCT2, CCT3, CCT4, CCT5, CCT6A/CCT6, CCT7, CCT8. Interacts with PACRG. Interacts with FLCN. Interacts with DLEC1. Interacts with SVEP1.

Its subcellular location is the cytoplasm. It carries out the reaction ATP + H2O = ADP + phosphate + H(+). Its function is as follows. Component of the chaperonin-containing T-complex (TRiC), a molecular chaperone complex that assists the folding of actin, tubulin and other proteins upon ATP hydrolysis. The TRiC complex mediates the folding of WRAP53/TCAB1, thereby regulating telomere maintenance. As part of the TRiC complex may play a role in the assembly of BBSome, a complex involved in ciliogenesis regulating transports vesicles to the cilia. The sequence is that of T-complex protein 1 subunit beta (CCT2) from Bos taurus (Bovine).